Reading from the N-terminus, the 426-residue chain is Enolase (426 aa).

Position 163 (Q163) interacts with (2R)-2-phosphoglycerate. Catalysis depends on E205, which acts as the Proton donor. Mg(2+) contacts are provided by D242, E283, and D310. (2R)-2-phosphoglycerate-binding residues include K335, R364, S365, and K386. The active-site Proton acceptor is K335.

It belongs to the enolase family. Mg(2+) is required as a cofactor.

It localises to the cytoplasm. The protein resides in the secreted. The protein localises to the cell surface. It carries out the reaction (2R)-2-phosphoglycerate = phosphoenolpyruvate + H2O. The protein operates within carbohydrate degradation; glycolysis; pyruvate from D-glyceraldehyde 3-phosphate: step 4/5. In terms of biological role, catalyzes the reversible conversion of 2-phosphoglycerate (2-PG) into phosphoenolpyruvate (PEP). It is essential for the degradation of carbohydrates via glycolysis. The protein is Enolase of Aquifex aeolicus (strain VF5).